Consider the following 412-residue polypeptide: Exodeoxyribonuclease 7 large subunit (412 aa).

It belongs to the XseA family. In terms of assembly, heterooligomer composed of large and small subunits.

It is found in the cytoplasm. It catalyses the reaction Exonucleolytic cleavage in either 5'- to 3'- or 3'- to 5'-direction to yield nucleoside 5'-phosphates.. Bidirectionally degrades single-stranded DNA into large acid-insoluble oligonucleotides, which are then degraded further into small acid-soluble oligonucleotides. This is Exodeoxyribonuclease 7 large subunit from Nostoc sp. (strain PCC 7120 / SAG 25.82 / UTEX 2576).